The following is a 565-amino-acid chain: Oxygen-dependent choline dehydrogenase (565 aa).

7 to 36 (DYIICGAGSAGNVLATRLTEDPGVTVLLLE) contributes to the FAD binding site. The active-site Proton acceptor is the His-474.

The protein belongs to the GMC oxidoreductase family. FAD is required as a cofactor.

It carries out the reaction choline + A = betaine aldehyde + AH2. The catalysed reaction is betaine aldehyde + NAD(+) + H2O = glycine betaine + NADH + 2 H(+). Its pathway is amine and polyamine biosynthesis; betaine biosynthesis via choline pathway; betaine aldehyde from choline (cytochrome c reductase route): step 1/1. Its function is as follows. Involved in the biosynthesis of the osmoprotectant glycine betaine. Catalyzes the oxidation of choline to betaine aldehyde and betaine aldehyde to glycine betaine at the same rate. The sequence is that of Oxygen-dependent choline dehydrogenase from Burkholderia pseudomallei (strain K96243).